The chain runs to 593 residues: ATPase family AAA domain-containing protein 3-B (593 aa).

3 disordered regions span residues 1-64, 109-129, and 145-164; these read MSWL…LDQS, EEKR…AQYQ, and QLQN…KQEA. The Mitochondrial intermembrane portion of the chain corresponds to 1 to 242; sequence MSWLFGLNRG…FRTFISDWDK (242 aa). Residues 12-27 are compositionally biased toward pro residues; that stretch reads PEPPGVPGFPEPPSPP. Basic and acidic residues-rich tracts occupy residues 33–44, 53–64, 109–121, and 150–164; these read GGDKNRPKDKWS, RAAKAARELDQS, EEKR…ETKQ, and ENLR…KQEA. Residues 51 to 215 adopt a coiled-coil conformation; the sequence is LERAAKAARE…QIRLKAAEHR (165 aa). Residues 243 to 260 form a helical membrane-spanning segment; it reads VTATVAGLTLLAVGVYTA. Residues 261–593 are Mitochondrial matrix-facing; that stretch reads KNGTGVAGRY…LQPLLEGTPV (333 aa). 348–355 provides a ligand contact to ATP; the sequence is GPPGTGKT. Basic and acidic residues predominate over residues 570-580; that stretch reads AEGKESTKEIG. Positions 570–593 are disordered; the sequence is AEGKESTKEIGKNPLQPLLEGTPV.

It belongs to the AAA ATPase family. Can form homooligomers. Homodimer formation at the N-terminus may be regulated by ATP and is required for the interaction with the inner surface of the mitochondrial outer membrane and correct mitochondrial homeostasis.

The protein localises to the mitochondrion inner membrane. The protein resides in the mitochondrion matrix. It is found in the mitochondrion nucleoid. The catalysed reaction is ATP + H2O = ADP + phosphate + H(+). Functionally, essential for mitochondrial network organization, mitochondrial metabolism and cell growth at organism and cellular level. May play an important role in mitochondrial protein synthesis. May also participate in mitochondrial DNA replication. May bind to mitochondrial DNA D-loops and contribute to nucleoid stability. Required for enhanced channeling of cholesterol for hormone-dependent steroidogenesis. Involved in mitochondrial-mediated antiviral innate immunity. Required to protect mitochondria from the PERK-mediated unfolded protein response: specifically inhibits the activity of EIF2AK3/PERK at mitochondria-endoplasmic reticulum contact sites, thereby providing a safe haven for mitochondrial protein translation during endoplasmic reticulum stress. Ability to inhibit EIF2AK3/PERK is independent of its ATPase activity. Also involved in the mitochondrial DNA damage response by promoting signaling between damaged genomes and the mitochondrial membrane, leading to activation of the integrated stress response (ISR). In Xenopus laevis (African clawed frog), this protein is ATPase family AAA domain-containing protein 3-B (atad3-b).